We begin with the raw amino-acid sequence, 338 residues long: Fructose-1,6-bisphosphatase 1 (338 aa).

The residue at position 2 (Ala2) is an N-acetylalanine. AMP contacts are provided by residues 18–22 (VMEEG) and 28–32 (TGELT). Residues Asp69 and Glu98 each contribute to the Mg(2+) site. 113-114 (KY) provides a ligand contact to AMP. Residues Asp119, Leu121, and Asp122 each contribute to the Mg(2+) site. Residue 122–125 (DGSS) coordinates substrate. Arg141 serves as a coordination point for AMP. At Lys151 the chain carries N6-succinyllysine. Residues 213 to 216 (NEGY), 244 to 249 (RYVGSM), Tyr265, and 275 to 277 (KLR) contribute to the substrate site. Phosphotyrosine occurs at positions 216, 245, and 265. Glu281 is a Mg(2+) binding site.

The protein belongs to the FBPase class 1 family. Homotetramer. Requires Mg(2+) as cofactor. As to expression, expressed in pancreatic islets.

It catalyses the reaction beta-D-fructose 1,6-bisphosphate + H2O = beta-D-fructose 6-phosphate + phosphate. It functions in the pathway carbohydrate biosynthesis; gluconeogenesis. Subject to complex allosteric regulation. The enzyme can assume an active R-state, or an inactive T-state. Intermediate conformations may exist. AMP acts as an allosteric inhibitor. AMP binding affects the turnover of bound substrate and not the affinity for substrate. Fructose 2,6-bisphosphate acts as a competitive inhibitor. Fructose 2,6-bisphosphate and AMP have synergistic effects. Functionally, catalyzes the hydrolysis of fructose 1,6-bisphosphate to fructose 6-phosphate in the presence of divalent cations, acting as a rate-limiting enzyme in gluconeogenesis. Plays a role in regulating glucose sensing and insulin secretion of pancreatic beta-cells. Appears to modulate glycerol gluconeogenesis in liver. Important regulator of appetite and adiposity; increased expression of the protein in liver after nutrient excess increases circulating satiety hormones and reduces appetite-stimulating neuropeptides and thus seems to provide a feedback mechanism to limit weight gain. In Homo sapiens (Human), this protein is Fructose-1,6-bisphosphatase 1 (FBP1).